The sequence spans 446 residues: Phosphoglucosamine mutase (446 aa).

Ser-101 serves as the catalytic Phosphoserine intermediate. Residues Ser-101, Asp-240, Asp-242, and Asp-244 each coordinate Mg(2+). Ser-101 carries the post-translational modification Phosphoserine.

It belongs to the phosphohexose mutase family. Mg(2+) serves as cofactor. In terms of processing, activated by phosphorylation.

The enzyme catalyses alpha-D-glucosamine 1-phosphate = D-glucosamine 6-phosphate. Its function is as follows. Catalyzes the conversion of glucosamine-6-phosphate to glucosamine-1-phosphate. The chain is Phosphoglucosamine mutase from Coxiella burnetii (strain CbuK_Q154) (Coxiella burnetii (strain Q154)).